Reading from the N-terminus, the 160-residue chain is Transcriptional repressor NrdR (160 aa).

Residues 3–34 (CPFCGHADTQVVDSRVSEEGDTIRRRRRCLSC) fold into a zinc finger. One can recognise an ATP-cone domain in the interval 49–139 (PTVVKRDGSR…VYKSFEDIGE (91 aa)).

This sequence belongs to the NrdR family. The cofactor is Zn(2+).

Functionally, negatively regulates transcription of bacterial ribonucleotide reductase nrd genes and operons by binding to NrdR-boxes. The polypeptide is Transcriptional repressor NrdR (Bordetella avium (strain 197N)).